The sequence spans 1133 residues: Early transcription factor large subunit homolog (1133 aa).

Residues 52–352 (KGGRAFFPCD…PNGQPLQRQQ (301 aa)) enclose the Helicase ATP-binding domain. 99 to 106 (WQTGTGKS) contributes to the ATP binding site. Residues 281-284 (DEIH) carry the DEAH box motif. The Helicase C-terminal domain maps to 524-724 (MMKDILSIIR…EGDKALRKHA (201 aa)).

This sequence belongs to the DEAD box helicase family. DEAH subfamily.

The protein resides in the virion. The enzyme catalyses ATP + H2O = ADP + phosphate + H(+). Its function is as follows. Putative initation factor. This Ornithodoros (relapsing fever ticks) protein is Early transcription factor large subunit homolog.